The primary structure comprises 460 residues: UDP-N-acetylmuramate--L-alanine ligase (460 aa).

An ATP-binding site is contributed by 118–124 (GAHGKTT).

Belongs to the MurCDEF family.

It localises to the cytoplasm. It catalyses the reaction UDP-N-acetyl-alpha-D-muramate + L-alanine + ATP = UDP-N-acetyl-alpha-D-muramoyl-L-alanine + ADP + phosphate + H(+). It functions in the pathway cell wall biogenesis; peptidoglycan biosynthesis. Cell wall formation. This Clostridium botulinum (strain Alaska E43 / Type E3) protein is UDP-N-acetylmuramate--L-alanine ligase.